The following is a 343-amino-acid chain: F17b-G fimbrial adhesin (343 aa).

Positions 1 to 22 (MTNFYKVFLAVFILVCCNISHA) are cleaved as a signal peptide. The interval 23 to 199 (VVSFIGSTEN…LNPFTLNDTV (177 aa)) is receptor-binding lectin domain. Residues 65 to 66 (AN), 110 to 111 (DT), and 138 to 141 (STQG) each bind a carbohydrate. Cysteine 75 and cysteine 132 are oxidised to a cystine. The segment at 200-343 (TSCRLLTPSA…GISTFTFSYQ (144 aa)) is fimbrillin-binding domain. The disordered stretch occupies residues 287 to 307 (LKFGPDSPVKGNENQWQLSTG). A compositionally biased stretch (polar residues) spans 298–307 (NENQWQLSTG).

Belongs to the fimbrial protein family.

It localises to the fimbrium. Functionally, essential fimbrial adhesion factor that mediates binding to N-acetylglucosamine-containing receptors in the host intestinal microvilli, leading to colonization of the intestinal tissue, and diarrhea or septicemia. Also confers adhesiveness to laminin and basement membranes. In Escherichia coli, this protein is F17b-G fimbrial adhesin (f17bG).